We begin with the raw amino-acid sequence, 296 residues long: Nucleotide-binding protein SEQ_0857 (296 aa).

Residue 13-20 (GMSGAGKT) participates in ATP binding. A GTP-binding site is contributed by 63 to 66 (DMRS).

It belongs to the RapZ-like family.

In terms of biological role, displays ATPase and GTPase activities. This is Nucleotide-binding protein SEQ_0857 from Streptococcus equi subsp. equi (strain 4047).